The primary structure comprises 507 residues: Maturase K (507 aa).

This sequence belongs to the intron maturase 2 family. MatK subfamily.

The protein resides in the plastid. It localises to the chloroplast. Functionally, usually encoded in the trnK tRNA gene intron. Probably assists in splicing its own and other chloroplast group II introns. This chain is Maturase K, found in Araucaria heterophylla (Norfolk Island pine).